The chain runs to 254 residues: Anamorsin homolog (254 aa).

The interval Val-4–Phe-133 is N-terminal SAM-like domain. The linker stretch occupies residues Ala-134–Lys-165. [2Fe-2S] cluster is bound by residues Cys-176, Cys-185, Cys-188, and Cys-190. Residues Cys-176–Cys-190 form a fe-S binding site A region. 4 residues coordinate [4Fe-4S] cluster: Cys-215, Cys-218, Cys-226, and Cys-229. 2 consecutive short sequence motifs (cx2C motif) follow at residues Cys-215–Cys-218 and Cys-226–Cys-229. The fe-S binding site B stretch occupies residues Cys-215–Cys-229.

It belongs to the anamorsin family. As to quaternary structure, monomer. It depends on [2Fe-2S] cluster as a cofactor. The cofactor is [4Fe-4S] cluster.

It localises to the cytoplasm. It is found in the mitochondrion intermembrane space. Functionally, component of the cytosolic iron-sulfur (Fe-S) protein assembly (CIA) machinery. Required for the maturation of extramitochondrial Fe-S proteins. Part of an electron transfer chain functioning in an early step of cytosolic Fe-S biogenesis, facilitating the de novo assembly of a [4Fe-4S] cluster on the cytosolic Fe-S scaffold complex. Electrons are transferred from NADPH via a FAD- and FMN-containing diflavin oxidoreductase. Together with the diflavin oxidoreductase, also required for the assembly of the diferric tyrosyl radical cofactor of ribonucleotide reductase (RNR), probably by providing electrons for reduction during radical cofactor maturation in the catalytic small subunit. The chain is Anamorsin homolog from Anopheles gambiae (African malaria mosquito).